Consider the following 232-residue polypeptide: 7-cyano-7-deazaguanine synthase (232 aa).

Leucine 7 to threonine 17 contributes to the ATP binding site. The Zn(2+) site is built by cysteine 195, cysteine 206, cysteine 209, and cysteine 212.

Belongs to the QueC family. Requires Zn(2+) as cofactor.

The catalysed reaction is 7-carboxy-7-deazaguanine + NH4(+) + ATP = 7-cyano-7-deazaguanine + ADP + phosphate + H2O + H(+). Its pathway is purine metabolism; 7-cyano-7-deazaguanine biosynthesis. Functionally, catalyzes the ATP-dependent conversion of 7-carboxy-7-deazaguanine (CDG) to 7-cyano-7-deazaguanine (preQ(0)). This Methanocaldococcus jannaschii (strain ATCC 43067 / DSM 2661 / JAL-1 / JCM 10045 / NBRC 100440) (Methanococcus jannaschii) protein is 7-cyano-7-deazaguanine synthase.